Here is a 456-residue protein sequence, read N- to C-terminus: Hydroxyproline dehydrogenase (456 aa).

Residues lysine 310 and lysine 320 each carry the N6-acetyllysine modification.

This sequence belongs to the proline oxidase family. FAD is required as a cofactor.

It catalyses the reaction trans-4-hydroxy-L-proline + a quinone = (3R,5S)-1-pyrroline-3-hydroxy-5-carboxylate + a quinol + H(+). The enzyme catalyses L-proline + a quinone = (S)-1-pyrroline-5-carboxylate + a quinol + H(+). In terms of biological role, dehydrogenase that converts trans-4-L-hydroxyproline to delta-1-pyrroline-3-hydroxy-5-carboxylate (Hyp) using ubiquinone-10 as the terminal electron acceptor. Can also use proline as a substrate but with a very much lower efficiency. Does not react with other diastereomers of Hyp: trans-4-D-hydroxyproline and cis-4-L-hydroxyproline. Ubiquininone analogs such as menadione, duroquinone and ubiquinone-1 react more efficiently than oxygen as the terminal electron acceptor during catalysis. The protein is Hydroxyproline dehydrogenase of Mus musculus (Mouse).